The following is a 166-amino-acid chain: Packaging efficiency factor P6 (166 aa).

Residues 134–166 (ILPESAGDQQEAEPVPSVGDQQETAPRKRFRAI) form a disordered region.

As to quaternary structure, heterodimer of P6 and P9; further multimerizes as hexamers of heterodimers. Part of the dodecameric portal complex that is composed of the packaging efficiency factor P6, the DNA packaging ATPase P9, and the internal heterododecamer P20/P22 which spans the virion inner membrane.

The protein localises to the virion. Together with the packaging ATPase P9, forms the external part of the portal vertex that is embeded in the capsid and which plays critical roles in genome packaging and genome ejection. Both proteins multimerize as a single ring-shaped heterdodecamer arranged around a central channel. The chain is Packaging efficiency factor P6 (VI) from Acinetobacter calcoaceticus (Arthrobacter siderocapsulatus).